The sequence spans 411 residues: Indian hedgehog protein (411 aa).

Positions 1–27 (MSPARLRPRLHFCLVLLLLLVVPAAWG) are cleaved as a signal peptide. Residue C28 is the site of N-palmitoyl cysteine attachment. Ca(2+) is bound by residues E94, E95, D100, T130, E131, D134, and D136. Residues H145, D152, and H187 each coordinate Zn(2+). G202 is lipidated: Cholesterol glycine ester. The N-linked (GlcNAc...) asparagine glycan is linked to N282.

The protein belongs to the hedgehog family. In terms of assembly, multimer. As to quaternary structure, interacts with BOC and CDON. Interacts with PTCH1. Interacts with glypican GPC3. Cholesterylation is required for N-product targeting to lipid rafts and multimerization. In terms of processing, the C-terminal domain displays an autoproteolysis activity and a cholesterol transferase activity. Both activities result in the cleavage of the full-length protein and covalent attachment of a cholesterol moiety to the C-terminal of the newly generated N-product. The N-product is the active species in both local and long-range signaling, whereas the C-product is degraded in the endoplasmic reticulum. Post-translationally, N-palmitoylation by HHAT of N-product is required for indian hedgehog protein N-product multimerization and full activity. Expressed in embryonic lung, and in adult kidney and liver.

It localises to the cell membrane. The protein localises to the endoplasmic reticulum membrane. Its subcellular location is the golgi apparatus membrane. The protein resides in the secreted. The enzyme catalyses glycyl-L-cysteinyl-[protein] + cholesterol + H(+) = [protein]-C-terminal glycyl cholesterol ester + N-terminal L-cysteinyl-[protein]. Functionally, plays a role in embryonic morphogenesis; it is involved in the regulation of endochondral skeleton formation, and the development of retinal pigment epithelium (RPE), photoreceptors and periocular tissues. The C-terminal part of the indian hedgehog protein precursor displays an autoproteolysis and a cholesterol transferase activity. Both activities result in the cleavage of the full-length protein into two parts followed by the covalent attachment of a cholesterol moiety to the C-terminal of the newly generated N-product. Both activities occur in the endoplasmic reticulum. Plays a role in hedgehog paracrine signaling. Associated with the very-low-density lipoprotein (VLDL) particles to function as a circulating morphogen for endothelial cell integrity maintenance. In terms of biological role, the dually lipidated indian hedgehog protein N-product is a morphogen which is essential for a variety of patterning events during development. Binds to the patched (PTCH1) receptor, which functions in association with smoothened (SMO), to activate the transcription of target genes. Plays a role in morphogenesis of the skeleton by coordinating growth and differentiation of the endochondral skeleton. Positively regulates PTHLH expression during endochondral bone formation preventing chondrocyte hypertrophy. In contrast, participates in normal chondrocyte proliferation in a PTHLH-independent pathway. This is Indian hedgehog protein from Homo sapiens (Human).